A 350-amino-acid polypeptide reads, in one-letter code: Holliday junction branch migration complex subunit RuvB (350 aa).

The interval 1–183 is large ATPase domain (RuvB-L); the sequence is MSAERLVNPH…FVAVHRLVFY (183 aa). ATP is bound by residues Leu-22, Arg-23, Gly-64, Lys-67, Thr-68, Ser-69, 130 to 132, Arg-173, Tyr-183, and Arg-220; that span reads EDF. Mg(2+) is bound at residue Thr-68. The interval 184 to 254 is small ATPAse domain (RuvB-S); that stretch reads SDAAMTEIVS…VAREALAQLE (71 aa). The segment at 257 to 350 is head domain (RuvB-H); that stretch reads ELGLDENDRR…ESGPQQGTLF (94 aa). Residues Arg-312 and Arg-317 each coordinate DNA.

It belongs to the RuvB family. As to quaternary structure, homohexamer. Forms an RuvA(8)-RuvB(12)-Holliday junction (HJ) complex. HJ DNA is sandwiched between 2 RuvA tetramers; dsDNA enters through RuvA and exits via RuvB. An RuvB hexamer assembles on each DNA strand where it exits the tetramer. Each RuvB hexamer is contacted by two RuvA subunits (via domain III) on 2 adjacent RuvB subunits; this complex drives branch migration. In the full resolvosome a probable DNA-RuvA(4)-RuvB(12)-RuvC(2) complex forms which resolves the HJ.

It is found in the cytoplasm. It carries out the reaction ATP + H2O = ADP + phosphate + H(+). In terms of biological role, the RuvA-RuvB-RuvC complex processes Holliday junction (HJ) DNA during genetic recombination and DNA repair, while the RuvA-RuvB complex plays an important role in the rescue of blocked DNA replication forks via replication fork reversal (RFR). RuvA specifically binds to HJ cruciform DNA, conferring on it an open structure. The RuvB hexamer acts as an ATP-dependent pump, pulling dsDNA into and through the RuvAB complex. RuvB forms 2 homohexamers on either side of HJ DNA bound by 1 or 2 RuvA tetramers; 4 subunits per hexamer contact DNA at a time. Coordinated motions by a converter formed by DNA-disengaged RuvB subunits stimulates ATP hydrolysis and nucleotide exchange. Immobilization of the converter enables RuvB to convert the ATP-contained energy into a lever motion, pulling 2 nucleotides of DNA out of the RuvA tetramer per ATP hydrolyzed, thus driving DNA branch migration. The RuvB motors rotate together with the DNA substrate, which together with the progressing nucleotide cycle form the mechanistic basis for DNA recombination by continuous HJ branch migration. Branch migration allows RuvC to scan DNA until it finds its consensus sequence, where it cleaves and resolves cruciform DNA. The polypeptide is Holliday junction branch migration complex subunit RuvB (Chloroflexus aggregans (strain MD-66 / DSM 9485)).